The following is a 371-amino-acid chain: 4-hydroxy-3-methylbut-2-en-1-yl diphosphate synthase (flavodoxin) (371 aa).

[4Fe-4S] cluster-binding residues include Cys270, Cys273, Cys305, and Glu312.

This sequence belongs to the IspG family. The cofactor is [4Fe-4S] cluster.

The enzyme catalyses (2E)-4-hydroxy-3-methylbut-2-enyl diphosphate + oxidized [flavodoxin] + H2O + 2 H(+) = 2-C-methyl-D-erythritol 2,4-cyclic diphosphate + reduced [flavodoxin]. Its pathway is isoprenoid biosynthesis; isopentenyl diphosphate biosynthesis via DXP pathway; isopentenyl diphosphate from 1-deoxy-D-xylulose 5-phosphate: step 5/6. Its function is as follows. Converts 2C-methyl-D-erythritol 2,4-cyclodiphosphate (ME-2,4cPP) into 1-hydroxy-2-methyl-2-(E)-butenyl 4-diphosphate. The chain is 4-hydroxy-3-methylbut-2-en-1-yl diphosphate synthase (flavodoxin) from Psychrobacter arcticus (strain DSM 17307 / VKM B-2377 / 273-4).